Consider the following 271-residue polypeptide: 4-diphosphocytidyl-2-C-methyl-D-erythritol kinase (271 aa).

Residue Lys-8 is part of the active site. 90–100 (PFGAGLGGGSA) contacts ATP. The active site involves Asp-132.

This sequence belongs to the GHMP kinase family. IspE subfamily.

The enzyme catalyses 4-CDP-2-C-methyl-D-erythritol + ATP = 4-CDP-2-C-methyl-D-erythritol 2-phosphate + ADP + H(+). Its pathway is isoprenoid biosynthesis; isopentenyl diphosphate biosynthesis via DXP pathway; isopentenyl diphosphate from 1-deoxy-D-xylulose 5-phosphate: step 3/6. Its function is as follows. Catalyzes the phosphorylation of the position 2 hydroxy group of 4-diphosphocytidyl-2C-methyl-D-erythritol. This is 4-diphosphocytidyl-2-C-methyl-D-erythritol kinase from Parabacteroides distasonis (strain ATCC 8503 / DSM 20701 / CIP 104284 / JCM 5825 / NCTC 11152).